The chain runs to 319 residues: Eukaryotic translation initiation factor 3 subunit H (319 aa).

Residues 19-153 (VQIDGLVVLK…LKCYRLTQSF (135 aa)) form the MPN domain.

It belongs to the eIF-3 subunit H family. In terms of assembly, component of the eukaryotic translation initiation factor 3 (eIF-3) complex.

The protein localises to the cytoplasm. In terms of biological role, component of the eukaryotic translation initiation factor 3 (eIF-3) complex, which is involved in protein synthesis of a specialized repertoire of mRNAs and, together with other initiation factors, stimulates binding of mRNA and methionyl-tRNAi to the 40S ribosome. The eIF-3 complex specifically targets and initiates translation of a subset of mRNAs involved in cell proliferation. The protein is Eukaryotic translation initiation factor 3 subunit H (eif3H) of Dictyostelium discoideum (Social amoeba).